An 872-amino-acid polypeptide reads, in one-letter code: Protein SEY1 (872 aa).

Residues 1-749 lie on the Cytoplasmic side of the membrane; that stretch reads MVANGHFAGV…KRSAIGGITQ (749 aa). Residues 49-307 enclose the GB1/RHD3-type G domain; sequence GFNYHLISVF…IPADGFAVYA (259 aa). Position 59–66 (59–66) interacts with GTP; that stretch reads GSQSTGKS. A coiled-coil region spans residues 482 to 504; the sequence is SNYQQELSLYQKDLENIGGQLRR. Residues 676–704 form a disordered region; that stretch reads LDKWIGHTPSSATPADEEDLTPIGGVDED. Acidic residues predominate over residues 690-704; the sequence is ADEEDLTPIGGVDED. The helical transmembrane segment at 750–770 threads the bilayer; it reads VPLYFYGLLLALGWNEIVAVL. The Lumenal segment spans residues 771 to 773; that stretch reads RNP. A helical transmembrane segment spans residues 774–794; that stretch reads AYFLLLFVCAVTAYVTYQLNL. Residues 795–872 are Cytoplasmic-facing; sequence WGPIIKMTEA…IDDADDDDDF (78 aa). The segment at 849–872 is disordered; the sequence is NRKSAGGFQNNRSHIDDADDDDDF.

This sequence belongs to the TRAFAC class dynamin-like GTPase superfamily. GB1/RHD3 GTPase family. RHD3 subfamily.

It localises to the endoplasmic reticulum membrane. In terms of biological role, cooperates with the reticulon proteins and tubule-shaping DP1 family proteins to generate and maintain the structure of the tubular endoplasmic reticulum network. Has GTPase activity, which is required for its function in ER organization. The polypeptide is Protein SEY1 (Paracoccidioides brasiliensis (strain Pb18)).